Consider the following 122-residue polypeptide: Putative ankyrin repeat protein L22 (122 aa).

ANK repeat units lie at residues 3-32 (DNNY…DIKA), 33-62 (DDDY…DIRV), 63-92 (NNDY…NIRA), and 94-122 (DDYA…VLNQ).

This Acanthamoeba polyphaga (Amoeba) protein is Putative ankyrin repeat protein L22.